The following is a 425-amino-acid chain: Bifunctional phosphoribosylaminoimidazole carboxylase/phosphoribosylaminoimidazole succinocarboxamide synthetase (425 aa).

N-acetylalanine is present on Ala2. The tract at residues 2–260 (ATAVVVNIGK…WVADRVELLL (259 aa)) is SAICAR synthetase domain. Tyr22 is subject to Phosphotyrosine. The residue at position 36 (Lys36) is an N6-acetyllysine. At Ser107 the chain carries Phosphoserine. Thr238 is subject to Phosphothreonine. Lys247 is modified (N6-acetyllysine). The interval 261–266 (KSDSQC) is linker. The interval 267 to 425 (RVVVLMGSTS…ADKKVRQCNL (159 aa)) is AIR carboxylase domain. Ser274 carries the phosphoserine modification. CO2 is bound at residue Ser332.

This sequence in the N-terminal section; belongs to the SAICAR synthetase family. The protein in the C-terminal section; belongs to the AIR carboxylase family. Class II subfamily. Homooctamer.

The catalysed reaction is 5-amino-1-(5-phospho-D-ribosyl)imidazole-4-carboxylate + L-aspartate + ATP = (2S)-2-[5-amino-1-(5-phospho-beta-D-ribosyl)imidazole-4-carboxamido]succinate + ADP + phosphate + 2 H(+). It catalyses the reaction 5-amino-1-(5-phospho-D-ribosyl)imidazole-4-carboxylate + H(+) = 5-amino-1-(5-phospho-beta-D-ribosyl)imidazole + CO2. It participates in purine metabolism; IMP biosynthesis via de novo pathway; 5-amino-1-(5-phospho-D-ribosyl)imidazole-4-carboxamide from 5-amino-1-(5-phospho-D-ribosyl)imidazole-4-carboxylate: step 1/2. Its pathway is purine metabolism; IMP biosynthesis via de novo pathway; 5-amino-1-(5-phospho-D-ribosyl)imidazole-4-carboxylate from 5-amino-1-(5-phospho-D-ribosyl)imidazole (carboxylase route): step 1/1. In terms of biological role, bifunctional phosphoribosylaminoimidazole carboxylase and phosphoribosylaminoimidazole succinocarboxamide synthetase catalyzing two reactions of the de novo purine biosynthetic pathway. The chain is Bifunctional phosphoribosylaminoimidazole carboxylase/phosphoribosylaminoimidazole succinocarboxamide synthetase from Mus musculus (Mouse).